The chain runs to 387 residues: Succinate--CoA ligase [ADP-forming] subunit beta (387 aa).

The ATP-grasp domain occupies 9-244 (KRLLAEEGVP…STQQDGREIT (236 aa)). ATP-binding positions include Lys46, 53–55 (GRG), Glu99, Ser102, and Glu107. Positions 199 and 213 each coordinate Mg(2+). Substrate-binding positions include Asn264 and 321 to 323 (GIT).

It belongs to the succinate/malate CoA ligase beta subunit family. Heterotetramer of two alpha and two beta subunits. The cofactor is Mg(2+).

It catalyses the reaction succinate + ATP + CoA = succinyl-CoA + ADP + phosphate. The enzyme catalyses GTP + succinate + CoA = succinyl-CoA + GDP + phosphate. It functions in the pathway carbohydrate metabolism; tricarboxylic acid cycle; succinate from succinyl-CoA (ligase route): step 1/1. Its function is as follows. Succinyl-CoA synthetase functions in the citric acid cycle (TCA), coupling the hydrolysis of succinyl-CoA to the synthesis of either ATP or GTP and thus represents the only step of substrate-level phosphorylation in the TCA. The beta subunit provides nucleotide specificity of the enzyme and binds the substrate succinate, while the binding sites for coenzyme A and phosphate are found in the alpha subunit. This is Succinate--CoA ligase [ADP-forming] subunit beta from Acidithiobacillus ferrooxidans (strain ATCC 23270 / DSM 14882 / CIP 104768 / NCIMB 8455) (Ferrobacillus ferrooxidans (strain ATCC 23270)).